A 212-amino-acid polypeptide reads, in one-letter code: 3-demethoxyubiquinol 3-hydroxylase (212 aa).

Residues Glu61, Glu91, His94, Glu143, Glu175, and His178 each coordinate Fe cation.

It belongs to the COQ7 family. Fe cation is required as a cofactor.

It localises to the cell membrane. It carries out the reaction a 5-methoxy-2-methyl-3-(all-trans-polyprenyl)benzene-1,4-diol + AH2 + O2 = a 3-demethylubiquinol + A + H2O. It functions in the pathway cofactor biosynthesis; ubiquinone biosynthesis. In terms of biological role, catalyzes the hydroxylation of 2-nonaprenyl-3-methyl-6-methoxy-1,4-benzoquinol during ubiquinone biosynthesis. The sequence is that of 3-demethoxyubiquinol 3-hydroxylase from Paraburkholderia phytofirmans (strain DSM 17436 / LMG 22146 / PsJN) (Burkholderia phytofirmans).